The primary structure comprises 489 residues: N-succinylglutamate 5-semialdehyde dehydrogenase (489 aa).

223-228 is an NAD(+) binding site; the sequence is GSSRTG. Active-site residues include Glu246 and Cys280.

The protein belongs to the aldehyde dehydrogenase family. AstD subfamily.

It catalyses the reaction N-succinyl-L-glutamate 5-semialdehyde + NAD(+) + H2O = N-succinyl-L-glutamate + NADH + 2 H(+). Its pathway is amino-acid degradation; L-arginine degradation via AST pathway; L-glutamate and succinate from L-arginine: step 4/5. Functionally, catalyzes the NAD-dependent reduction of succinylglutamate semialdehyde into succinylglutamate. This chain is N-succinylglutamate 5-semialdehyde dehydrogenase, found in Aeromonas salmonicida (strain A449).